Here is a 324-residue protein sequence, read N- to C-terminus: Beta-ketoacyl-[acyl-carrier-protein] synthase III (324 aa).

Residues cysteine 114 and histidine 251 contribute to the active site. The interval 252 to 256 (QANQR) is ACP-binding. Residue asparagine 281 is part of the active site.

Belongs to the thiolase-like superfamily. FabH family. As to quaternary structure, homodimer.

It localises to the cytoplasm. The enzyme catalyses malonyl-[ACP] + acetyl-CoA + H(+) = 3-oxobutanoyl-[ACP] + CO2 + CoA. Its pathway is lipid metabolism; fatty acid biosynthesis. Catalyzes the condensation reaction of fatty acid synthesis by the addition to an acyl acceptor of two carbons from malonyl-ACP. Catalyzes the first condensation reaction which initiates fatty acid synthesis and may therefore play a role in governing the total rate of fatty acid production. Possesses both acetoacetyl-ACP synthase and acetyl transacylase activities. Its substrate specificity determines the biosynthesis of branched-chain and/or straight-chain of fatty acids. The chain is Beta-ketoacyl-[acyl-carrier-protein] synthase III from Rhodospirillum rubrum (strain ATCC 11170 / ATH 1.1.1 / DSM 467 / LMG 4362 / NCIMB 8255 / S1).